Consider the following 358-residue polypeptide: Membrane-bound lytic murein transglycosylase C (358 aa).

The N-terminal stretch at 1 to 16 (MKKILALLVIAPLLVS) is a signal peptide. Cys17 is lipidated: N-palmitoyl cysteine. Residue Cys17 is the site of S-diacylglycerol cysteine attachment.

The protein belongs to the transglycosylase Slt family.

The protein localises to the cell outer membrane. The catalysed reaction is Exolytic cleavage of the (1-&gt;4)-beta-glycosidic linkage between N-acetylmuramic acid (MurNAc) and N-acetylglucosamine (GlcNAc) residues in peptidoglycan, from either the reducing or the non-reducing ends of the peptidoglycan chains, with concomitant formation of a 1,6-anhydrobond in the MurNAc residue.. In terms of biological role, murein-degrading enzyme. May play a role in recycling of muropeptides during cell elongation and/or cell division. The polypeptide is Membrane-bound lytic murein transglycosylase C (Yersinia enterocolitica serotype O:8 / biotype 1B (strain NCTC 13174 / 8081)).